Consider the following 577-residue polypeptide: MNIQALLSEKVRQAMIAAGAPADCEPQVRQSAKVQFGDYQANGMMAVAKKLGMAPRQLAEQVLTHLDLNGIASKVEIAGPGFINIFLDPAFLAEHVQQALASDRLGVATPEKQTIVVDYSAPNVAKEMHVGHLRSTIIGDAAVRTLEFLGHKVIRANHVGDWGTQFGMLIAWLEKQQQENAGEMELADLEGFYRDAKKHYDEDEEFAERARNYVVKLQSGDEYFREMWRKLVDITMTQNQITYDRLNVTLTRDDVMGESLYNPMLPGIVADLKAKGLAVESEGATVVFLDEFKNKEGEPMGVIIQKKDGGYLYTTTDIACAKYRYETLHADRVLYYIDSRQHQHLMQAWAIVRKAGYVPESVPLEHHMFGMMLGKDGKPFKTRAGGTVKLADLLDEALERARRLVAEKNPDMPADELEKLANAVGIGAVKYADLSKNRTTDYIFDWDNMLAFEGNTAPYMQYAYTRVLSVFRKAEIDEEQLAAAPVIIREDREAQLAARLLQFEETLTVVAREGTPHVMCAYLYDLAGLFSGFYEHCPILSAENEEVRNSRLKLAQLTAKTLKLGLDTLGIETVERM.

A 'HIGH' region motif is present at residues proline 122–histidine 132.

The protein belongs to the class-I aminoacyl-tRNA synthetase family. In terms of assembly, monomer.

The protein resides in the cytoplasm. It catalyses the reaction tRNA(Arg) + L-arginine + ATP = L-arginyl-tRNA(Arg) + AMP + diphosphate. The sequence is that of Arginine--tRNA ligase from Escherichia coli (strain K12 / MC4100 / BW2952).